The chain runs to 257 residues: Large ribosomal subunit protein eL8z (257 aa).

This sequence belongs to the eukaryotic ribosomal protein eL8 family.

This is Large ribosomal subunit protein eL8z (RPL7AA) from Arabidopsis thaliana (Mouse-ear cress).